A 3999-amino-acid polypeptide reads, in one-letter code: Hybrid PKS-NRPS synthetase xenE (3999 aa).

The Ketosynthase family 3 (KS3) domain occupies 13–449 (REPIAVVGSG…GTNAHCIIEN (437 aa)). Active-site for beta-ketoacyl synthase activity residues include C186, H325, and H369. Residues 562-879 (VFTGQGAQWP…TGLLNRGKDD (318 aa)) form the Malonyl-CoA:ACP transacylase (MAT) domain. Positions 949-1084 (NPLLGSRTTD…GRVIVITGET (136 aa)) are N-terminal hotdog fold. Residues 949–1253 (NPLLGSRTTD…VVAFAEQTED (305 aa)) form the PKS/mFAS DH domain. Positions 950–1252 (PLLGSRTTDV…RVVAFAEQTE (303 aa)) are dehydratase (DH) domain. H981 serves as the catalytic Proton acceptor; for dehydratase activity. A C-terminal hotdog fold region spans residues 1099 to 1253 (LVDIPEDRFY…VVAFAEQTED (155 aa)). D1159 (proton donor; for dehydratase activity) is an active-site residue. Residues 1298 to 1593 (YMKQLVTLFP…FSGADSPMPE (296 aa)) form a methyltransferase (cMeT) domain region. Positions 2133–2306 (TYVLFGLTSD…AASILHLGAV (174 aa)) constitute a Ketoreductase (KR) domain. Residues 2414-2495 (EEILEIVQDA…QLVEYAIGSM (82 aa)) enclose the Carrier 1 domain. S2455 is subject to O-(pantetheine 4'-phosphoryl)serine. The segment at 2501-2573 (PNRADSAKAS…EESPSESVND (73 aa)) is disordered. Residues 2526–2554 (SVSSSPSSLPKTSASGSSQQMSEGSSKTS) are compositionally biased toward low complexity. The interval 2580 to 3015 (EKVLPVSPGQ…EEVSLFTEQE (436 aa)) is condensation. The interval 3045–3453 (AVHTDKVALK…RIEGDTQIKL (409 aa)) is adenylation. Residues 3562–3642 (RKLTDTESKL…AMAAAIQDTS (81 aa)) enclose the Carrier 2 domain. Residue S3602 is modified to O-(pantetheine 4'-phosphoryl)serine. Residues 3681–3900 (LTGATGFLGK…IDLITVEKAA (220 aa)) form a reductase-like (R) domain (R) region.

The protein in the C-terminal section; belongs to the NRP synthetase family.

The protein operates within mycotoxin biosynthesis. Hybrid PKS-NRPS synthetase; part of the gene cluster that mediates the biosynthesis of xenoacremones such as xenoacremone A, a compound that shows inhibitory activity toward the PI3K/AKT signaling pathway and which has the ability to induce apoptosis of A549 lung cancer cells. Within the pathway, cooperation of the hybrid PKS-NRPS xenE and the trans-acting enoyl reductase xenG is responsible for the formation of the reduced tyrosine-nonaketide derivative. The PKS module of xenE acted in combination with the trans-acting enoyl reductase xenG to produce a double-methylated nonaketide attached to the ACP domain. In parallel, the adenylation (A) domain of the NRPS module activated L-tyrosine, which was then transferred to the ACP domain. The condensation (C) domain subsequently linked this group to the polyketide chain, forming an enzyme-bound amide. Reductive release by the C-terminal R domain afforded the aldehyde derivative. The alpha/beta hydrolase xenA then accelerates intramolecular nucleophilic attack to give a pyrrolidone derivative. Subsequently, three enzymes, xenF, xenD, and xenC, coordinately participate in the conversion to xenoacremone B. XenF catalyzes sigmatropic rearrangement to form an A-ring, which leads to an unusual intermediate with a hexane ring, which is required for the formation of the tricarbocyclic product. Epoxidation catalyzed by xenD and the formation of the paracyclophane ether catalyzed by xenC initiate a spontaneous intramolecular Diels-Alder (IMDA) reaction to yield xenoacremone B. Spontaneous hydration of xenoacremone B leads to the formation of xenoacremone A, which undergoes subsequent methylation to afford xenoacremone C. In Xenoacremonium sinensis (Endophyte fungus), this protein is Hybrid PKS-NRPS synthetase xenE.